A 145-amino-acid chain; its full sequence is Holo-[acyl-carrier-protein] synthase (145 aa).

Residues Asp8 and Glu59 each coordinate Mg(2+).

This sequence belongs to the P-Pant transferase superfamily. AcpS family. Requires Mg(2+) as cofactor.

It localises to the cytoplasm. It carries out the reaction apo-[ACP] + CoA = holo-[ACP] + adenosine 3',5'-bisphosphate + H(+). Transfers the 4'-phosphopantetheine moiety from coenzyme A to a Ser of acyl-carrier-protein. The polypeptide is Holo-[acyl-carrier-protein] synthase (Granulibacter bethesdensis (strain ATCC BAA-1260 / CGDNIH1)).